Consider the following 312-residue polypeptide: Taste receptor type 2 member 7 (312 aa).

Residues 1-9 (MTYETDTTL) lie on the Extracellular side of the membrane. A helical transmembrane segment spans residues 10-30 (MFVAVCEALVGILGNAFIALV). The Cytoplasmic segment spans residues 31 to 49 (NFMGWMKNRKITAIDLILS). The helical transmembrane segment at 50–70 (SLAMSRICLQCIILLDCIILV) threads the bilayer. The Extracellular segment spans residues 71-101 (QYPDTYNRGKEMRIIDFFWTLTNHLSVWFAT). A helical transmembrane segment spans residues 102–122 (CLSIFYFFKIANFFHPLFLWI). At 123-128 (KWRIDK) the chain is on the cytoplasmic side. A helical membrane pass occupies residues 129-149 (LILRTLLACLILSLCFSLPVT). The Extracellular portion of the chain corresponds to 150–187 (ENLTDDFRRCVKTKERINSTLRCKLNKAGYASVKVNLN). N151 and N167 each carry an N-linked (GlcNAc...) asparagine glycan. The helical transmembrane segment at 188-208 (LVMLFPFSVSLVSFLLLILSL) threads the bilayer. The Cytoplasmic portion of the chain corresponds to 209 to 235 (WRHTRQMQLNVTGYNDPSTTAHVKATK). A helical transmembrane segment spans residues 236 to 256 (AVISFLVLFIVYCLAFLIATS). The Extracellular portion of the chain corresponds to 257–266 (SYFMPESELA). Residues 267 to 287 (VIWGELIALIYPSSHSFILIL) traverse the membrane as a helical segment. Residues 288 to 312 (GNSKLKQASVRVLCRVKTMLKGRKY) are Cytoplasmic-facing.

Belongs to the G-protein coupled receptor T2R family. Expressed in subsets of taste receptor cells of the tongue and palate epithelium and exclusively in gustducin-positive cells. Expressed in 15% taste bud cells in circumvallate and foliate papillae but only in 2% in fungiform papillae. Expressed in the duodenum, antrum and fundus (part of the stomach) and in gastric endocrine cells.

It localises to the membrane. Gustducin-coupled receptor implicated in the perception of bitter compounds in the oral cavity and the gastrointestinal tract. Signals through PLCB2 and the calcium-regulated cation channel TRPM5. This is Taste receptor type 2 member 7 (Tas2r7) from Rattus norvegicus (Rat).